Here is a 305-residue protein sequence, read N- to C-terminus: Ribosomal RNA small subunit methyltransferase H (305 aa).

S-adenosyl-L-methionine contacts are provided by residues 30 to 32 (GGH), Asp49, Phe74, Asp96, and Gln103.

The protein belongs to the methyltransferase superfamily. RsmH family.

It is found in the cytoplasm. It catalyses the reaction cytidine(1402) in 16S rRNA + S-adenosyl-L-methionine = N(4)-methylcytidine(1402) in 16S rRNA + S-adenosyl-L-homocysteine + H(+). Functionally, specifically methylates the N4 position of cytidine in position 1402 (C1402) of 16S rRNA. This Francisella tularensis subsp. holarctica (strain LVS) protein is Ribosomal RNA small subunit methyltransferase H.